The following is a 733-amino-acid chain: MNKIWRELGLTDEEYEKIISILGREPNITELGMYSVMWSEHCSYKNSKPLLKYLPTKGERVIQGPGENAGVLDIGDNLAVVMKIESHNHPSAIEPYQGAATGVGGIIRDIFTMGARPIALLDSLRFGIPDDKRTKYLIENVVAGIADYGNCIGIPTVGGDTYFEESYKGNPLVNAMCVGIVEKDKIKKGIAKGIGNPVMVVGATTGRDGIGGASFASQELSEESEEKRPSVQVGDPFMEKLLLEACLELFETDAVVAIQDMGAAGLTSSSCEMASRGGVGMEIDLDKVPLREEGMTPYEIMLSESQERMLVVVKKGKEEDVQKIFKKWGLNAATIGKITDDGMIRVIKDGKIVAEVPAKSLTEDAPQYVREEEVPKWQEEVKKLDINEVKPPEDMNKVLKDVISSLNIASKEWIYSQYDYMVRTDTVITPGMDAAVVRIKGTRKAIALTTDCNGRYCYLDPYIGSQIAVAEAARNLCMVGAKPIGVTDCLNFGNPEKKEIYWQLKNSIFGIAKACETFQIPVVSGNVSLYNENEGEAIYPTPVIGMAGLIEDVSKICTMDFKKERDVIIILGENKGEIGGSEYLKVCFGMVKGQPPQIDLEKEKRLQELVLKLIDEGLINSSHDISEGGFAAALVESAIAGKKGAKISLQTSLRADIELFSESQSRALITVSPEKVDEVLKIAYEHQVPAQKVGVVEGKDIVIDVNGKRIIDLPLEVLEESWRGRIKWEMERN.

Histidine 41 is a catalytic residue. ATP contacts are provided by tyrosine 44 and lysine 83. Mg(2+) is bound at residue glutamate 85. Residues 86 to 89 (SHNH) and arginine 108 contribute to the substrate site. Histidine 87 (proton acceptor) is an active-site residue. Aspartate 109 contacts Mg(2+). The interval 212–232 (GASFASQELSEESEEKRPSVQ) is disordered. Glutamine 232 contributes to the substrate binding site. Aspartate 260 is a binding site for Mg(2+). 304–306 (ESQ) serves as a coordination point for substrate. 2 residues coordinate ATP: aspartate 488 and glycine 525. Position 526 (asparagine 526) interacts with Mg(2+). Position 528 (serine 528) interacts with substrate.

It belongs to the FGAMS family. Monomer. Part of the FGAM synthase complex composed of 1 PurL, 1 PurQ and 2 PurS subunits.

It is found in the cytoplasm. It carries out the reaction N(2)-formyl-N(1)-(5-phospho-beta-D-ribosyl)glycinamide + L-glutamine + ATP + H2O = 2-formamido-N(1)-(5-O-phospho-beta-D-ribosyl)acetamidine + L-glutamate + ADP + phosphate + H(+). Its pathway is purine metabolism; IMP biosynthesis via de novo pathway; 5-amino-1-(5-phospho-D-ribosyl)imidazole from N(2)-formyl-N(1)-(5-phospho-D-ribosyl)glycinamide: step 1/2. Its function is as follows. Part of the phosphoribosylformylglycinamidine synthase complex involved in the purines biosynthetic pathway. Catalyzes the ATP-dependent conversion of formylglycinamide ribonucleotide (FGAR) and glutamine to yield formylglycinamidine ribonucleotide (FGAM) and glutamate. The FGAM synthase complex is composed of three subunits. PurQ produces an ammonia molecule by converting glutamine to glutamate. PurL transfers the ammonia molecule to FGAR to form FGAM in an ATP-dependent manner. PurS interacts with PurQ and PurL and is thought to assist in the transfer of the ammonia molecule from PurQ to PurL. The chain is Phosphoribosylformylglycinamidine synthase subunit PurL from Caldanaerobacter subterraneus subsp. tengcongensis (strain DSM 15242 / JCM 11007 / NBRC 100824 / MB4) (Thermoanaerobacter tengcongensis).